The primary structure comprises 192 residues: Ras-like protein 2 (192 aa).

12–19 (GGGGVGKS) is a binding site for GTP. Positions 34-42 (YDPTIEDSY) match the Effector region motif. The S-palmitoyl cysteine moiety is linked to residue cysteine 46. GTP contacts are provided by residues 59 to 63 (DTAGQ) and 118 to 121 (NKCD). Residues cysteine 120 and cysteine 147 are each lipidated (S-palmitoyl cysteine). A Cysteine methyl ester modification is found at cysteine 189. The S-farnesyl cysteine moiety is linked to residue cysteine 189. Residues 190–192 (CLM) constitute a propeptide, removed in mature form.

Belongs to the small GTPase superfamily. Ras family. In terms of assembly, interacts with hzg.

The protein localises to the cell membrane. It catalyses the reaction GTP + H2O = GDP + phosphate + H(+). With respect to regulation, alternates between an inactive form bound to GDP and an active form bound to GTP. Activated by a guanine nucleotide-exchange factor (GEF) and inactivated by a GTPase-activating protein (GAP). Its function is as follows. May be involved in endocytic processes and/or other transport pathways mediated by vesicle trafficking. May interact functionally with ROP protein. Ras proteins bind GDP/GTP and possess intrinsic GTPase activity. The chain is Ras-like protein 2 (Ras64B) from Drosophila melanogaster (Fruit fly).